The primary structure comprises 457 residues: Protein trichome birefringence-like 4 (457 aa).

The helical; Signal-anchor for type II membrane protein transmembrane segment at 19–37 (IFLTSLFFLSLFLLSSSSL) threads the bilayer. The GDS motif motif lies at 173–175 (GDS). The short motif at 420–434 (DCSHWCLPGVPDSWN) is the DCXHWCLPGXXDXWN motif element.

It belongs to the PC-esterase family. TBL subfamily.

Its subcellular location is the membrane. May act as a bridging protein that binds pectin and other cell wall polysaccharides. Probably involved in maintaining esterification of pectins. May be involved in the specific O-acetylation of cell wall polymers. This chain is Protein trichome birefringence-like 4 (TBL4), found in Arabidopsis thaliana (Mouse-ear cress).